A 401-amino-acid chain; its full sequence is Glucose/mannose transporter GlcP (401 aa).

The next 12 membrane-spanning stretches (helical) occupy residues 11-31 (AFFF…PFLL), 43-63 (VIIF…PLMI), 78-98 (IMLV…IIVM), 99-119 (AFLL…FVIA), 132-152 (EVLF…FIDI), 156-176 (FLPY…WLIF), 212-232 (LGFF…FANF), 247-267 (LISV…IGFV), 278-298 (LFSC…SNPI), 306-326 (LIGL…SIII), 336-356 (LFIA…GWSL), and 360-380 (TILL…GISV).

The protein belongs to the major facilitator superfamily.

The protein resides in the cell membrane. Functionally, can transport glucose, mannose, 2-deoxyglucose and methyl alpha-glucoside, but not galactose. The sequence is that of Glucose/mannose transporter GlcP (glcP) from Bacillus subtilis (strain 168).